We begin with the raw amino-acid sequence, 845 residues long: Matrin-3 (845 aa).

Position 2 is an N-acetylserine (Ser2). Lys3 is subject to N6-acetyllysine; alternate. Residue Lys3 forms a Glycyl lysine isopeptide (Lys-Gly) (interchain with G-Cter in SUMO2); alternate linkage. Ser4, Ser9, Ser14, Ser22, Ser41, Ser118, and Ser126 each carry phosphoserine. Glycyl lysine isopeptide (Lys-Gly) (interchain with G-Cter in SUMO2) cross-links involve residues Lys132 and Lys146. 2 disordered regions span residues 147–174 (RRRT…YRVP) and 187–213 (DSFD…ESGY). Thr150 is subject to Phosphothreonine. Ser157 carries the post-translational modification Phosphoserine. The residue at position 158 (Tyr158) is a Phosphotyrosine. Residues 160-174 (RDGRSATREPPYRVP) show a composition bias toward basic and acidic residues. A phosphoserine mark is found at Ser164, Ser188, and Ser195. The segment covering 201 to 213 (DYDHGSRSQESGY) has biased composition (basic and acidic residues). Tyr202 is modified (phosphotyrosine). 3 positions are modified to phosphoserine: Ser206, Ser208, and Ser211. Tyr219 bears the Phosphotyrosine mark. The residue at position 234 (Ser234) is a Phosphoserine. Lys245 is covalently cross-linked (Glycyl lysine isopeptide (Lys-Gly) (interchain with G-Cter in SUMO2)). A Phosphoserine modification is found at Ser264. Residue Lys269 forms a Glycyl lysine isopeptide (Lys-Gly) (interchain with G-Cter in SUMO2) linkage. At Ser275 the chain carries Phosphoserine. A disordered region spans residues 342 to 394 (PFMLQQSTNPAPGILGPPPPSFHLGGPAVGPRGNLGAGNGNLQGPRHMQKGRV). Residues 398-473 (RVVHIMDFQR…KPVRVHLSQK (76 aa)) enclose the RRM 1 domain. Glycyl lysine isopeptide (Lys-Gly) (interchain with G-Cter in SUMO2) cross-links involve residues Lys478, Lys487, and Lys491. The RRM 2 domain maps to 496–571 (RVIHLSNLPH…RCVKVDLSEK (76 aa)). Residues Ser509 and Ser511 each carry the phosphoserine modification. Lys515 participates in a covalent cross-link: Glycyl lysine isopeptide (Lys-Gly) (interchain with G-Cter in SUMO2). N6-acetyllysine; alternate is present on Lys522. Lys522 participates in a covalent cross-link: Glycyl lysine isopeptide (Lys-Gly) (interchain with G-Cter in SUMO2); alternate. Position 533 is a phosphoserine (Ser533). Glycyl lysine isopeptide (Lys-Gly) (interchain with G-Cter in SUMO2) cross-links involve residues Lys554 and Lys555. The residue at position 571 (Lys571) is an N6-acetyllysine. The segment at 588–785 (KKDKSRKRSY…EYRIGPYQPN (198 aa)) is disordered. A phosphoserine mark is found at Ser596, Ser598, Ser604, and Ser606. Positions 600–643 (DGKESPSDKKSKTDGAQKTENPAEGKEQEEKSGEDGEKDTKDDQ) are enriched in basic and acidic residues. Glycyl lysine isopeptide (Lys-Gly) (interchain with G-Cter in SUMO2) cross-links involve residues Lys617 and Lys630. Residues 653-665 (ESEDELLVDEEEA) show a composition bias toward acidic residues. A phosphoserine mark is found at Ser654, Ser671, Ser673, and Ser674. Thr679 carries the post-translational modification Phosphothreonine. Ser689 is subject to Phosphoserine. Positions 689 to 704 (SDGKKEPSDKAVKKDA) are enriched in basic and acidic residues. Positions 708–716 (SKKKLKKVD) match the Nuclear localization signal motif. Residues Lys717 and Lys734 each participate in a glycyl lysine isopeptide (Lys-Gly) (interchain with G-Cter in SUMO2) cross-link. Thr739 is modified (phosphothreonine). A phosphoserine mark is found at Ser745, Ser757, and Ser760. The segment covering 765–778 (DENKEDYTIPDEYR) has biased composition (basic and acidic residues). Lys768 is covalently cross-linked (Glycyl lysine isopeptide (Lys-Gly) (interchain with G-Cter in SUMO2)). The Matrin-type zinc-finger motif lies at 799–830 (FYCKLCSLFYTNEEVAKNTHCSSLPHYQKLKK). Lys834 carries the N6-acetyllysine; alternate modification. Lys834 is covalently cross-linked (Glycyl lysine isopeptide (Lys-Gly) (interchain with G-Cter in SUMO2); alternate).

As to quaternary structure, part of a complex consisting of SFPQ, NONO and MATR3. Interacts with AGO1 and AGO2. Part of a complex composed at least of ASH2L, EMSY, HCFC1, HSPA8, CCAR2, MATR3, MKI67, RBBP5, TUBB2A, WDR5 and ZNF335; this complex may have a histone H3-specific methyltransferase activity. Interacts with TARDBP. Part of the HDP-RNP complex composed of at least HEXIM1, PRKDC, XRCC5, XRCC6, paraspeckle proteins (SFPQ, NONO, PSPC1, RBM14, and MATR3) and NEAT1 RNA. Interacts with FUS. Interacts with IGF2BP1. Interacts with IGF2BP2 and IGF2BP3. Interacts with RBPMS.

The protein resides in the nucleus matrix. In terms of biological role, may play a role in transcription or may interact with other nuclear matrix proteins to form the internal fibrogranular network. In association with the SFPQ-NONO heteromer may play a role in nuclear retention of defective RNAs. Plays a role in the regulation of DNA virus-mediated innate immune response by assembling into the HDP-RNP complex, a complex that serves as a platform for IRF3 phosphorylation and subsequent innate immune response activation through the cGAS-STING pathway. Binds to N6-methyladenosine (m6A)-containing mRNAs and contributes to MYC stability by binding to m6A-containing MYC mRNAs. May bind to specific miRNA hairpins. This chain is Matrin-3 (Matr3), found in Rattus norvegicus (Rat).